Here is a 217-residue protein sequence, read N- to C-terminus: Orotate phosphoribosyltransferase (217 aa).

Lys-26 contributes to the 5-phospho-alpha-D-ribose 1-diphosphate binding site. 34-35 contributes to the orotate binding site; the sequence is FF. 5-phospho-alpha-D-ribose 1-diphosphate contacts are provided by residues 72 to 73, Arg-99, Lys-100, Lys-103, His-105, and 124 to 132; these read YK and DDVITAGTA. Residues Thr-128 and Arg-156 each contribute to the orotate site.

Belongs to the purine/pyrimidine phosphoribosyltransferase family. PyrE subfamily. In terms of assembly, homodimer. Requires Mg(2+) as cofactor.

The catalysed reaction is orotidine 5'-phosphate + diphosphate = orotate + 5-phospho-alpha-D-ribose 1-diphosphate. Its pathway is pyrimidine metabolism; UMP biosynthesis via de novo pathway; UMP from orotate: step 1/2. Functionally, catalyzes the transfer of a ribosyl phosphate group from 5-phosphoribose 1-diphosphate to orotate, leading to the formation of orotidine monophosphate (OMP). The protein is Orotate phosphoribosyltransferase of Aeromonas salmonicida (strain A449).